Consider the following 573-residue polypeptide: MLO-like protein 11 (573 aa).

Topologically, residues 1-19 are extracellular; that stretch reads MGEGEENGNEADSNERSLA. Residues 20 to 40 form a helical membrane-spanning segment; that stretch reads LSPTWSVAIVLTVFVVVSLIV. The Cytoplasmic portion of the chain corresponds to 41-69; that stretch reads ERSIYRLSTWLRKTKRKPMFAALEKMKEE. A helical membrane pass occupies residues 70 to 90; the sequence is LMLLGFISLLLTATSSTIANI. Residues 91-163 lie on the Extracellular side of the membrane; it reads CVPSSFYNDR…SYEGLEQLHR (73 aa). Residues 164 to 184 form a helical membrane-spanning segment; the sequence is FIFIMAVTHVTYSCLTMLLAI. Residues 185–287 are Cytoplasmic-facing; sequence VKIHSWRIWE…IRSMEEEFQR (103 aa). Helical transmembrane passes span 288–308 and 309–329; these read IVGV…FNIK and GSNL…LVGA. The Cytoplasmic segment spans residues 330–371; that stretch reads KLQHVIATLALENAGLTEYPSGVKLRPRDELFWFNKPELLLS. Residues 372–392 form a helical membrane-spanning segment; sequence LIHFILFQNSFELASFFWFWW. The Extracellular segment spans residues 393 to 411; sequence QFGYSSCFLKNHYLVYFRL. A helical transmembrane segment spans residues 412–432; sequence LLGFAGQFLCSYSTLPLYALV. Residues 433–573 are Cytoplasmic-facing; the sequence is TQMGTNYKAA…SSSLPSEKRV (141 aa). The interval 446-467 is calmodulin-binding; the sequence is QRIRETIRGWGKATRRKRRHGL. 2 disordered regions span residues 500–532 and 554–573; these read EQQR…TSSR and RSEP…EKRV. Low complexity predominate over residues 507–516; that stretch reads EQGTTELELQ. Residues 561–573 are compositionally biased toward polar residues; it reads LSRSSSLPSEKRV.

The protein belongs to the MLO family.

Its subcellular location is the membrane. May be involved in modulation of pathogen defense and leaf cell death. Activity seems to be regulated by Ca(2+)-dependent calmodulin binding and seems not to require heterotrimeric G proteins. This is MLO-like protein 11 (MLO11) from Arabidopsis thaliana (Mouse-ear cress).